The primary structure comprises 214 residues: Ribonuclease HII (214 aa).

In terms of domain architecture, RNase H type-2 spans 26 to 214 (EIVCGVDEAG…PVREAFDLIR (189 aa)). 3 residues coordinate a divalent metal cation: aspartate 32, glutamate 33, and aspartate 124.

The protein belongs to the RNase HII family. Requires Mn(2+) as cofactor. It depends on Mg(2+) as a cofactor.

The protein resides in the cytoplasm. The enzyme catalyses Endonucleolytic cleavage to 5'-phosphomonoester.. In terms of biological role, endonuclease that specifically degrades the RNA of RNA-DNA hybrids. The sequence is that of Ribonuclease HII from Burkholderia pseudomallei (strain 668).